The primary structure comprises 75 residues: UPF0352 protein YejL (75 aa).

It belongs to the UPF0352 family.

The sequence is that of UPF0352 protein YejL from Salmonella arizonae (strain ATCC BAA-731 / CDC346-86 / RSK2980).